Here is a 788-residue protein sequence, read N- to C-terminus: Histidine--tRNA ligase, cytoplasmic (788 aa).

Residues 252–286 (PQACEENEAGSSTENPHASGEKPKGDKKSKKKKTL) form a disordered region.

Belongs to the class-II aminoacyl-tRNA synthetase family. In terms of assembly, homodimer.

The catalysed reaction is tRNA(His) + L-histidine + ATP = L-histidyl-tRNA(His) + AMP + diphosphate + H(+). In Oryza sativa subsp. japonica (Rice), this protein is Histidine--tRNA ligase, cytoplasmic.